A 78-amino-acid chain; its full sequence is Small ribosomal subunit protein bS18 (78 aa).

Belongs to the bacterial ribosomal protein bS18 family. Part of the 30S ribosomal subunit. Forms a tight heterodimer with protein bS6.

Its function is as follows. Binds as a heterodimer with protein bS6 to the central domain of the 16S rRNA, where it helps stabilize the platform of the 30S subunit. This Limosilactobacillus reuteri (strain DSM 20016) (Lactobacillus reuteri) protein is Small ribosomal subunit protein bS18.